The sequence spans 166 residues: Putative transcriptional regulatory protein for hcr operon (166 aa).

The HTH marR-type domain occupies 1-155 (MRKHRGKPAN…LIGLLKRLYR (155 aa)).

In terms of biological role, may be involved in the regulation of genes for 4-hydroxybenzoyl-CoA reductase. In Thauera aromatica, this protein is Putative transcriptional regulatory protein for hcr operon.